The primary structure comprises 506 residues: DNA nucleotidylexotransferase (506 aa).

Residues 11–17 (SQRKRQK) carry the Nuclear localization signal motif. The BRCT domain maps to 27-124 (GYEIKFNKLV…RPVDLEKKYH (98 aa)). The interval 258-262 (VGVKT) is involved in DNA binding. A 2'-deoxyribonucleoside 5'-triphosphate contacts are provided by residues 333 to 338 (GFRRGK) and 342 to 345 (HDID). Mg(2+)-binding residues include aspartate 343, aspartate 345, and aspartate 430. 445–446 (GW) provides a ligand contact to a 2'-deoxyribonucleoside 5'-triphosphate.

This sequence belongs to the DNA polymerase type-X family. Mg(2+) is required as a cofactor.

It localises to the nucleus. The enzyme catalyses DNA(n) + a 2'-deoxyribonucleoside 5'-triphosphate = DNA(n+1) + diphosphate. In terms of biological role, template-independent DNA polymerase which catalyzes the random addition of deoxynucleoside 5'-triphosphate to the 3'-end of a DNA initiator. One of the in vivo functions of this enzyme is the addition of nucleotides at the junction (N region) of rearranged Ig heavy chain and T-cell receptor gene segments during the maturation of B- and T-cells. The sequence is that of DNA nucleotidylexotransferase (DNTT) from Gallus gallus (Chicken).